We begin with the raw amino-acid sequence, 434 residues long: Peptidase B (434 aa).

Lys198 and Asp203 together coordinate Mn(2+). The active site involves Lys210. Mn(2+) is bound by residues Asp221, Asp280, and Glu282. Arg284 is a catalytic residue.

This sequence belongs to the peptidase M17 family. As to quaternary structure, homohexamer. Mn(2+) serves as cofactor.

It localises to the cytoplasm. It catalyses the reaction Release of an N-terminal amino acid, Xaa, from a peptide or arylamide. Xaa is preferably Glu or Asp but may be other amino acids, including Leu, Met, His, Cys and Gln.. Probably plays an important role in intracellular peptide degradation. This Pasteurella multocida (strain Pm70) protein is Peptidase B.